Here is a 339-residue protein sequence, read N- to C-terminus: GTPase Obg (339 aa).

The region spanning 1-159 (MKFVDEAFVR…RELKLELKLL (159 aa)) is the Obg domain. In terms of domain architecture, OBG-type G spans 160 to 333 (ADVGLLGLPN…LCYDLMSFLE (174 aa)). GTP-binding positions include 166-173 (GLPNAGKS), 191-195 (FTTLY), 213-216 (DIPG), 283-286 (NKID), and 314-316 (SAI). Residues serine 173 and threonine 193 each coordinate Mg(2+).

This sequence belongs to the TRAFAC class OBG-HflX-like GTPase superfamily. OBG GTPase family. In terms of assembly, monomer. It depends on Mg(2+) as a cofactor.

The protein resides in the cytoplasm. Functionally, an essential GTPase which binds GTP, GDP and possibly (p)ppGpp with moderate affinity, with high nucleotide exchange rates and a fairly low GTP hydrolysis rate. Plays a role in control of the cell cycle, stress response, ribosome biogenesis and in those bacteria that undergo differentiation, in morphogenesis control. The sequence is that of GTPase Obg from Coxiella burnetii (strain RSA 331 / Henzerling II).